The sequence spans 325 residues: uncharacterized protein (325 aa).

The region spanning 49–151 is the HD domain; it reads RYEHSIGVML…ELCADRTDYT (103 aa).

This is an uncharacterized protein from Bacillus subtilis (strain 168).